The primary structure comprises 254 residues: tRNA (guanine-N(1)-)-methyltransferase (254 aa).

Residues Gly-112 and 131 to 136 (IGDYIL) each bind S-adenosyl-L-methionine.

It belongs to the RNA methyltransferase TrmD family. In terms of assembly, homodimer.

The protein resides in the cytoplasm. It catalyses the reaction guanosine(37) in tRNA + S-adenosyl-L-methionine = N(1)-methylguanosine(37) in tRNA + S-adenosyl-L-homocysteine + H(+). Specifically methylates guanosine-37 in various tRNAs. The protein is tRNA (guanine-N(1)-)-methyltransferase of Sulfurihydrogenibium sp. (strain YO3AOP1).